Reading from the N-terminus, the 102-residue chain is uncharacterized protein (102 aa).

The next 3 membrane-spanning stretches (helical) occupy residues 14 to 34 (IKNW…VISA), 35 to 55 (VAFT…LILI), and 76 to 96 (ILSI…HCYI).

The protein localises to the cell membrane. This is an uncharacterized protein from Methanocaldococcus jannaschii (strain ATCC 43067 / DSM 2661 / JAL-1 / JCM 10045 / NBRC 100440) (Methanococcus jannaschii).